Reading from the N-terminus, the 311-residue chain is Aquaporin-1 (311 aa).

Residues M1 to L16 lie on the Cytoplasmic side of the membrane. Residues A17 to I37 traverse the membrane as a helical segment. The Extracellular segment spans residues Q38 to E56. Residues H57–F77 traverse the membrane as a helical segment. R78 is a topological domain (cytoplasmic). Residues V79 to K99 traverse the membrane as a helical segment. The NPA 1 motif lies at N85–N87. A topological domain (extracellular) is located at residue P100. Residues L101–V121 form a helical membrane-spanning segment. The Cytoplasmic portion of the chain corresponds to R122–Q143. The helical transmembrane segment at G144–A164 threads the bilayer. Residues E165 to E168 lie on the Extracellular side of the membrane. A helical membrane pass occupies residues A169–V189. Over Y190–H215 the chain is Cytoplasmic. The NPA 2 signature appears at N197–A199. A helical membrane pass occupies residues W216–L236. The Extracellular portion of the chain corresponds to K237–V311. The tract at residues D276–V311 is disordered. Positions E288–S298 are enriched in basic and acidic residues. Positions S299 to V311 are enriched in polar residues. N-linked (GlcNAc...) asparagine glycosylation occurs at N300.

Belongs to the MIP/aquaporin (TC 1.A.8) family.

Its subcellular location is the cell membrane. It carries out the reaction H2O(in) = H2O(out). The catalysed reaction is H2O2(out) = H2O2(in). It catalyses the reaction nitric oxide(out) = nitric oxide(in). The enzyme catalyses CO2(out) = CO2(in). In terms of biological role, water channel required to facilitate the transport of water across membranes. Also mediates the transport nitric oxide, hydrogen peroxide and carbon dioxide across the membrane. Required for Hartig net development in trembling aspen trees. Contributes in fungal cellular processes during the basidiocarp formation. The protein is Aquaporin-1 of Laccaria bicolor (Bicoloured deceiver).